We begin with the raw amino-acid sequence, 395 residues long: Chalcone synthase (395 aa).

At V2 the chain carries N-acetylvaline. V2 bears the N-acetylalanine mark. C169 is a catalytic residue.

It belongs to the thiolase-like superfamily. Chalcone/stilbene synthases family.

The catalysed reaction is (E)-4-coumaroyl-CoA + 3 malonyl-CoA + 3 H(+) = 2',4,4',6'-tetrahydroxychalcone + 3 CO2 + 4 CoA. Its pathway is secondary metabolite biosynthesis; flavonoid biosynthesis. Functionally, the primary product of this enzyme is 4,2',4',6'-tetrahydroxychalcone (also termed naringenin-chalcone or chalcone) which can under specific conditions spontaneously isomerize into naringenin. This chain is Chalcone synthase (CHS), found in Arabidopsis thaliana (Mouse-ear cress).